A 415-amino-acid chain; its full sequence is MERLLHMTFRNKKIHLNVGTIGHFSHGKTTLTAAITAVLAGIGYTQPKQNDAIDSTSEEKARNMSIYVHHVEYETAARHYSHLDCPGHVNYINNMITGVSQMDGAILVVSAVDGPMAQTKEHILLAKLLGISSILVFINKEDELDDQEVLPMLIQNMRQILIYYGFPGHTSPILCGSALLALEAMNENPNFNRGKNKWVDKISSLIDHLDLYLPTPRRKLNKPFLMPIERVILIPSFGLVGTGTIEKGHINIGESVEIVGFKDTQHSKVISLKMFNKTLEQAIAGDDIGIFLEGTNKNNFQKGMVIAKPNTIQSWNHFEAQIYILRREEGGRRSPFFQGYCPQFYFRTIQITGRMESFEYEIGGKTWMVMPGEKIKAIIQLIFPIALKKKMRFVIREGGFTIGVGIILELIKIKN.

Positions 13-217 constitute a tr-type G domain; it reads KIHLNVGTIG…HLDLYLPTPR (205 aa). Positions 22–29 are G1; the sequence is GHFSHGKT. 22 to 29 is a GTP binding site; sequence GHFSHGKT. Residue Thr29 participates in Mg(2+) binding. Positions 63–67 are G2; that stretch reads NMSIY. Residues 84–87 form a G3 region; sequence DCPG. GTP contacts are provided by residues 84–88 and 139–142; these read DCPGH and NKED. Residues 139 to 142 form a G4 region; sequence NKED. The G5 stretch occupies residues 177–179; the sequence is SAL.

The protein belongs to the TRAFAC class translation factor GTPase superfamily. Classic translation factor GTPase family. EF-Tu/EF-1A subfamily.

It is found in the plastid. The protein localises to the chloroplast. The enzyme catalyses GTP + H2O = GDP + phosphate + H(+). Functionally, GTP hydrolase that promotes the GTP-dependent binding of aminoacyl-tRNA to the A-site of ribosomes during protein biosynthesis. This Coleochaete orbicularis (Charophycean green alga) protein is Elongation factor Tu, chloroplastic (tufA).